Consider the following 235-residue polypeptide: Secreted RxLR effector protein 27 (235 aa).

The N-terminal stretch at M1–A25 is a signal peptide. Residues R36 to R60 carry the RxLR-dEER motif.

The protein belongs to the RxLR effector family.

It localises to the secreted. It is found in the host cytoplasm. The protein resides in the host nucleus. Its function is as follows. Effector that acts as a broad suppressor of cell death to interrupt plant immunity. Inhibits cell death induced by cell death-inducing proteins, including the PAMP elicitor INF1 from P.infestans. The protein is Secreted RxLR effector protein 27 of Plasmopara viticola (Downy mildew of grapevine).